Consider the following 362-residue polypeptide: Porin Omp2b (362 aa).

A signal peptide spans 1 to 22 (MNIKSLLLGSAAALVAASGAQA).

This sequence belongs to the alphaproteobacteria porin family. In terms of assembly, homotrimer.

The protein resides in the cell outer membrane. Forms passive diffusion pores that allow small molecular weight hydrophilic materials across the outer membrane. This is Porin Omp2b (omp2b) from Brucella neotomae.